Reading from the N-terminus, the 505-residue chain is Histidine--tRNA ligase (505 aa).

Belongs to the class-II aminoacyl-tRNA synthetase family. In terms of assembly, homodimer.

The protein localises to the cytoplasm. The catalysed reaction is tRNA(His) + L-histidine + ATP = L-histidyl-tRNA(His) + AMP + diphosphate + H(+). This Jannaschia sp. (strain CCS1) protein is Histidine--tRNA ligase.